The following is a 567-amino-acid chain: ATP-dependent RNA helicase HAS1 (567 aa).

The interval 1–109 (MAKNVNSKAN…AQNDKFEDAG (109 aa)) is disordered. The segment covering 30 to 40 (EFSDSEDDEVD) has biased composition (acidic residues). Residues 35–88 (EDDEVDQEKLVEELDEDFDEVANMLGADVTDPEEKKQSKLERKRKRDEEATAEY) are a coiled coil. Positions 103-131 (DKFEDAGLSEPTMRAISDMGFKTMTKVQA) match the Q motif motif. A Helicase ATP-binding domain is found at 134–310 (IPPLLAGKDV…RISLRPGPLY (177 aa)). 147–154 (AKTGSGKT) is an ATP binding site. Residues 257-260 (DEAD) carry the DEAD box motif. Positions 324-484 (GLEQGYVVCD…EYEFPTNKIV (161 aa)) constitute a Helicase C-terminal domain.

The protein belongs to the DEAD box helicase family. DDX18/HAS1 subfamily. Associates in the nucleolus with the 60S and pre-60S ribosomal subunits.

It is found in the nucleus. The protein localises to the nucleolus. It carries out the reaction ATP + H2O = ADP + phosphate + H(+). In terms of biological role, ATP-dependent RNA helicase involved in 40S ribosomal subunit biogenesis. Required for the processing and cleavage of 35S pre-rRNA at sites A0, A1, and A2, leading to mature 18S rRNA. The chain is ATP-dependent RNA helicase HAS1 (HAS1) from Scheffersomyces stipitis (strain ATCC 58785 / CBS 6054 / NBRC 10063 / NRRL Y-11545) (Yeast).